Reading from the N-terminus, the 123-residue chain is Gamma-synuclein (123 aa).

Repeat copies occupy residues 20 to 30 (EKTKQGVTEAA) and 31 to 41 (EKTKEGVMYVG). Residues 20–67 (EKTKQGVTEAAEKTKEGVMYVGTKTKGERGTSVTSVAEKTKEQANAVS) are 4 X 11 AA tandem repeats of [EGSA]-K-T-K-[EQ]-[GQ]-V-X(4). A 3; approximate repeat occupies 42 to 56 (TKTKGERGTSVTSVA). Repeat unit 4 spans residues 57 to 67 (EKTKEQANAVS). Residues S67 and S72 each carry the phosphoserine modification. A disordered region spans residues 93–123 (GVVRKEDLEPPAQDQEAKEQEEGEEAKSGGD). Positions 107–123 (QEAKEQEEGEEAKSGGD) are enriched in basic and acidic residues. Phosphoserine; by BARK1, CaMK2 and CK2 is present on S120.

It belongs to the synuclein family. May be a centrosome-associated protein. Interacts with MYOC; affects its secretion and its aggregation. Post-translationally, phosphorylated. Phosphorylation by GRK5 appears to occur on residues distinct from the residue phosphorylated by other kinases. In terms of tissue distribution, specifically expressed in the peripheral nervous system. High expression in motoneurons of the brainstem. Also found in neurons of many other brain regions including the cerebellar cortex, thalamus, hypothalamus and CA1, CA2, CA3 and CA4 regions of the hippocampus.

It localises to the cytoplasm. Its subcellular location is the perinuclear region. The protein localises to the cytoskeleton. It is found in the microtubule organizing center. The protein resides in the centrosome. It localises to the spindle. In terms of biological role, plays a role in neurofilament network integrity. May be involved in modulating axonal architecture during development and in the adult. In vitro, increases the susceptibility of neurofilament-H to calcium-dependent proteases. May also function in modulating the keratin network in skin. Activates the MAPK and Elk-1 signal transduction pathway. This is Gamma-synuclein (Sncg) from Rattus norvegicus (Rat).